Here is a 435-residue protein sequence, read N- to C-terminus: Gamma-glutamyl phosphate reductase (435 aa).

Belongs to the gamma-glutamyl phosphate reductase family.

The protein resides in the cytoplasm. The catalysed reaction is L-glutamate 5-semialdehyde + phosphate + NADP(+) = L-glutamyl 5-phosphate + NADPH + H(+). It functions in the pathway amino-acid biosynthesis; L-proline biosynthesis; L-glutamate 5-semialdehyde from L-glutamate: step 2/2. Functionally, catalyzes the NADPH-dependent reduction of L-glutamate 5-phosphate into L-glutamate 5-semialdehyde and phosphate. The product spontaneously undergoes cyclization to form 1-pyrroline-5-carboxylate. The polypeptide is Gamma-glutamyl phosphate reductase (Nostoc punctiforme (strain ATCC 29133 / PCC 73102)).